Reading from the N-terminus, the 756-residue chain is Inhibitor of nuclear factor kappa-B kinase subunit beta (756 aa).

The Protein kinase domain occupies Trp-15–Phe-300. ATP is bound by residues Leu-21–Val-29 and Lys-44. Asp-145 functions as the Proton acceptor in the catalytic mechanism. Lys-163 is covalently cross-linked (Glycyl lysine isopeptide (Lys-Gly) (interchain with G-Cter in ubiquitin)). Phosphoserine; by TBK1 and PKC/PRKCZ is present on Ser-177. Cys-179 is modified (S-nitrosocysteine). A Phosphoserine; by TBK1, PKC/PRKCZ and PDPK1 modification is found at Ser-181. Pro-191 carries the post-translational modification Hydroxyproline. The tract at residues Leu-458 to Leu-479 is leucine-zipper. Ser-670, Ser-672, Ser-675, Ser-682, Ser-689, Ser-697, Ser-705, Ser-733, and Ser-740 each carry phosphoserine; by autocatalysis. The interval Leu-737 to Leu-742 is NEMO-binding.

This sequence belongs to the protein kinase superfamily. Ser/Thr protein kinase family. I-kappa-B kinase subfamily. In terms of assembly, component of the I-kappa-B-kinase (IKK) core complex consisting of CHUK, IKBKB and IKBKG; probably four alpha/CHUK-beta/IKBKB dimers are associated with four gamma/IKBKG subunits. The IKK core complex seems to associate with regulatory or adapter proteins to form a IKK-signalosome holo-complex. The IKK complex associates with TERF2IP/RAP1, leading to promote IKK-mediated phosphorylation of RELA/p65. Part of a complex composed of NCOA2, NCOA3, CHUK/IKKA, IKBKB, IKBKG and CREBBP. Part of a 70-90 kDa complex at least consisting of CHUK/IKKA, IKBKB, NFKBIA, RELA, ELP1 and MAP3K14. Found in a membrane raft complex, at least composed of BCL10, CARD11, DPP4 and IKBKB. Interacts with SQSTM1 through PRKCZ or PRKCI. Forms an NGF-induced complex with IKBKB, PRKCI and TRAF6. May interact with MAVS/IPS1. Interacts with NALP2. Interacts with TICAM1. Interacts with FAF1; the interaction disrupts the IKK complex formation. Interacts with ATM. Part of a ternary complex consisting of TANK, IKBKB and IKBKG. Interacts with NIBP; the interaction is direct. Interacts with ARRB1 and ARRB2. Interacts with TRIM21. Interacts with NLRC5; prevents IKBKB phosphorylation and kinase activity. Interacts with PDPK1. Interacts with EIF2AK2/PKR. The phosphorylated form interacts with PPM1A and PPM1B. Interacts with ZNF268; the interaction is further increased in a TNF-alpha-dependent manner. Interacts with IKBKE. Interacts with ZC3H12A. Interacts with AKAP13. Interacts with IFIT5; the interaction synergizes the recruitment of IKK to MAP3K7 and enhances IKK phosphorylation. Interacts with LRRC14; disrupts IKBKB-IKBKG interaction preventing I-kappa-B-kinase (IKK) core complex formation and leading to a decrease of IKBKB phosphorylation and NF-kappaB activation. Interacts with SASH1. Interacts with ARFIP2. Interacts with FKBP5. In terms of processing, upon cytokine stimulation, phosphorylated on Ser-177 and Ser-181 by MEKK1 and/or MAP3K14/NIK as well as TBK1 and PRKCZ; which enhances activity. Phosphorylated by MAP3K7/TAK1 in response to NOD1 and NOD2 signaling, promoting activation and phosphorylation of NF-kappa-B inhibitors, leading to NF-kappa-B activation. Once activated, autophosphorylates on the C-terminal serine cluster; which decreases activity and prevents prolonged activation of the inflammatory response. Phosphorylated by the IKK-related kinases TBK1 and IKBKE, which is associated with reduced CHUK/IKKA and IKBKB activity and NF-kappa-B-dependent gene transcription. Dephosphorylated at Ser-177 and Ser-181 by PPM1A and PPM1B. Ubiquitinated. Monoubiquitination involves TRIM21 that leads to inhibition of Tax-induced NF-kappa-B signaling. 'Ser-163' may not serve as a monoubiquitination site. Ubiquitination on 'Ser-163' may modulate phosphorylation on C-terminal serine residues. Post-translationally, hydroxylated by PHD1/EGLN2, loss of hydroxylation under hypoxic conditions results in activation of NF-kappa-B.

It is found in the cytoplasm. It localises to the nucleus. Its subcellular location is the membrane raft. It catalyses the reaction L-seryl-[I-kappa-B protein] + ATP = O-phospho-L-seryl-[I-kappa-B protein] + ADP + H(+). The enzyme catalyses L-seryl-[protein] + ATP = O-phospho-L-seryl-[protein] + ADP + H(+). It carries out the reaction L-threonyl-[protein] + ATP = O-phospho-L-threonyl-[protein] + ADP + H(+). Serine kinase that plays an essential role in the NF-kappa-B signaling pathway which is activated by multiple stimuli such as inflammatory cytokines, bacterial or viral products, DNA damages or other cellular stresses. Acts as a part of the canonical IKK complex in the conventional pathway of NF-kappa-B activation. Phosphorylates inhibitors of NF-kappa-B on 2 critical serine residues. These modifications allow polyubiquitination of the inhibitors and subsequent degradation by the proteasome. In turn, free NF-kappa-B is translocated into the nucleus and activates the transcription of hundreds of genes involved in immune response, growth control, or protection against apoptosis. In addition to the NF-kappa-B inhibitors, phosphorylates several other components of the signaling pathway including NEMO/IKBKG, NF-kappa-B subunits RELA and NFKB1, as well as IKK-related kinases TBK1 and IKBKE. IKK-related kinase phosphorylations may prevent the overproduction of inflammatory mediators since they exert a negative regulation on canonical IKKs. Phosphorylates FOXO3, mediating the TNF-dependent inactivation of this pro-apoptotic transcription factor. Also phosphorylates other substrates including NAA10, NCOA3, BCL10 and IRS1. Phosphorylates RIPK1 at 'Ser-25' which represses its kinase activity and consequently prevents TNF-mediated RIPK1-dependent cell death. Phosphorylates the C-terminus of IRF5, stimulating IRF5 homodimerization and translocation into the nucleus. In Bos taurus (Bovine), this protein is Inhibitor of nuclear factor kappa-B kinase subunit beta (IKBKB).